The chain runs to 232 residues: MVKAVVLLSGGLDSATVLAIARQQGYECYALSVSYGQRHGAELAAAKNLARSLGATAHKIIQVDLSTFGGSALIDKEREIPTDGVTPGIPSTYVPARNTIMLSIALAWAEVLGSGDIFIGVNAIDYSGYPDCRPEYIEAFETMANVATKAGIEGTRLAIHAPLMNLSKAEIIKRGGVLGVDYSMTVSCYQADDAGLACGVCDSCRLRRAGFESADVPDVTRYHAGFRQTPAS.

8–18 (LSGGLDSATVL) contributes to the ATP binding site. Zn(2+) is bound by residues Cys-188, Cys-198, Cys-201, and Cys-204.

This sequence belongs to the QueC family. The cofactor is Zn(2+).

The enzyme catalyses 7-carboxy-7-deazaguanine + NH4(+) + ATP = 7-cyano-7-deazaguanine + ADP + phosphate + H2O + H(+). The protein operates within purine metabolism; 7-cyano-7-deazaguanine biosynthesis. Catalyzes the ATP-dependent conversion of 7-carboxy-7-deazaguanine (CDG) to 7-cyano-7-deazaguanine (preQ(0)). This is 7-cyano-7-deazaguanine synthase from Nitrosospira multiformis (strain ATCC 25196 / NCIMB 11849 / C 71).